A 154-amino-acid chain; its full sequence is 6,7-dimethyl-8-ribityllumazine synthase (154 aa).

5-amino-6-(D-ribitylamino)uracil is bound by residues 22-23, 56-58, and 80-82; these read FN, AFE, and TVI. 85-86 is a (2S)-2-hydroxy-3-oxobutyl phosphate binding site; it reads AT. His-88 acts as the Proton donor in catalysis. Phe-113 contacts 5-amino-6-(D-ribitylamino)uracil. A (2S)-2-hydroxy-3-oxobutyl phosphate-binding site is contributed by Arg-127.

It belongs to the DMRL synthase family. In terms of assembly, forms an icosahedral capsid composed of 60 subunits, arranged as a dodecamer of pentamers. Can interact with riboflavin synthase, forming a lumazine synthase/riboflavin synthase complex, also designated as 'heavy riboflavin synthase complex', which consists of a trimer of riboflavin synthase enclosed within the icosahedral structure composed of 60 subunits of 6,7-dimethyl-8-ribityllumazine synthase.

It carries out the reaction (2S)-2-hydroxy-3-oxobutyl phosphate + 5-amino-6-(D-ribitylamino)uracil = 6,7-dimethyl-8-(1-D-ribityl)lumazine + phosphate + 2 H2O + H(+). Its pathway is cofactor biosynthesis; riboflavin biosynthesis; riboflavin from 2-hydroxy-3-oxobutyl phosphate and 5-amino-6-(D-ribitylamino)uracil: step 1/2. Catalyzes the formation of 6,7-dimethyl-8-ribityllumazine by condensation of 5-amino-6-(D-ribitylamino)uracil with 3,4-dihydroxy-2-butanone 4-phosphate. This is the penultimate step in the biosynthesis of riboflavin. Is able to use the non-natural R enantiomer of 3,4-dihydroxy-2-butanone 4-phosphate as a substrate, but with less efficiency than the natural S enantiomer. Cannot use unphosphorylated 3,4-dihydroxy-2-butanone, 3,4-dihydroxy-2-butanone 3-phosphate or diacetyl as substrates. In Bacillus subtilis (strain 168), this protein is 6,7-dimethyl-8-ribityllumazine synthase (ribH).